The sequence spans 1712 residues: Latent-transforming growth factor beta-binding protein 1 (1712 aa).

The first 20 residues, M1–S20, serve as a signal peptide directing secretion. Residues S63–R148 form a disordered region. The span at K136–S147 shows a compositional bias: polar residues. In terms of domain architecture, EGF-like 1 spans T181–E213. Disulfide bonds link C185–C195, C189–C201, and C203–C212. Residues N339 and N370 are each glycosylated (N-linked (GlcNAc...) asparagine). Residues R391–Q423 form the EGF-like 2 domain. Intrachain disulfides connect C395/C405, C399/C411, C413/C422, C551/C573, C560/C586, and C574/C589. The N-linked (GlcNAc...) asparagine glycan is linked to N416. The 53-residue stretch at G549–M601 folds into the TB 1 domain. A glycan (N-linked (GlcNAc...) asparagine) is linked at N612. One can recognise an EGF-like 3; calcium-binding domain in the interval D618–V658. Intrachain disulfides connect C622–C633, C628–C642, C644–C657, C671–C694, C681–C706, C695–C709, and C696–C721. O-linked (Glc) serine glycosylation occurs at S639. In terms of domain architecture, TB 2 spans G669–C721. Positions K752–L803 are disordered. T761 and T793 each carry an O-linked (GalNAc...) threonine glycan. The EGF-like 4; calcium-binding domain occupies E865 to I906. 37 cysteine pairs are disulfide-bonded: C869–C881, C876–C890, C892–C905, C911–C923, C918–C932, C934–C947, C953–C964, C959–C973, C976–C988, C994–C1005, C1000–C1014, C1017–C1028, C1034–C1045, C1040–C1054, C1056–C1069, C1075–C1086, C1081–C1095, C1097–C1110, C1116–C1127, C1122–C1136, C1138–C1151, C1157–C1169, C1164–C1178, C1180–C1192, C1198–C1210, C1204–C1219, C1221–C1234, C1240–C1252, C1246–C1261, C1263–C1276, C1282–C1294, C1289–C1303, C1305–C1319, C1340–C1363, C1350–C1375, C1364–C1380, and C1365–C1392. One can recognise an EGF-like 5; calcium-binding domain in the interval D907–I948. The O-linked (Glc) serine glycan is linked to S929. An EGF-like 6; calcium-binding domain is found at D949 to E989. N966 carries the (3R)-3-hydroxyasparagine modification. The region spanning D990–L1029 is the EGF-like 7; calcium-binding domain. The O-linked (Glc) serine glycan is linked to S1011. The 41-residue stretch at D1030 to Q1070 folds into the EGF-like 8; calcium-binding domain. The N-linked (GlcNAc...) asparagine glycan is linked to N1042. S1051 carries O-linked (Glc) serine glycosylation. Residues D1071–E1111 form the EGF-like 9; calcium-binding domain. The EGF-like 10; calcium-binding domain maps to D1112 to E1152. N1129 is subject to (3R)-3-hydroxyasparagine. The O-linked (Glc) serine glycan is linked to S1133. Positions D1153–Q1193 constitute an EGF-like 11; calcium-binding domain. An EGF-like 12; calcium-binding domain is found at D1194–E1235. A glycan (O-linked (Glc) serine) is linked at S1216. Positions D1236 to V1277 constitute an EGF-like 13; calcium-binding domain. N-linked (GlcNAc...) asparagine glycosylation occurs at N1242. Residues D1278 to R1320 enclose the EGF-like 14; calcium-binding domain. The tract at residues E1335 to G1402 is 8-Cys3 region. The TB 3 domain occupies K1338–C1392. N-linked (GlcNAc...) asparagine glycosylation is present at N1357. The residue at position 1405 (S1405) is a Phosphoserine. An EGF-like 15; calcium-binding domain is found at D1415 to F1457. Disulfide bonds link C1419–C1432, C1427–C1441, C1443–C1456, C1462–C1473, C1468–C1482, C1484–C1497, C1517–C1541, C1527–C1553, C1542–C1556, and C1543–C1568. The EGF-like 16; calcium-binding domain occupies D1458 to V1498. O-linked (Glc) serine glycosylation is present at S1479. The interval V1498 to E1712 is C-terminal domain. Residues D1515–C1568 enclose the TB 4 domain. A phosphoserine mark is found at S1588 and S1607. The EGF-like 17 domain maps to Q1612–V1652. Intrachain disulfides connect C1616–C1627, C1622–C1636, C1638–C1651, C1657–C1672, C1667–C1681, and C1683–C1696. The EGF-like 18; calcium-binding domain maps to D1653–T1697. Residue S1678 is glycosylated (O-linked (Glc) serine).

This sequence belongs to the LTBP family. As to quaternary structure, interacts with TGFB1; associates via disulfide bonds with the Latency-associated peptide chain (LAP) regulatory chain of TGFB1, leading to regulate activation of TGF-beta-1. LTBP1 does not bind directly to TGF-beta-1, the active chain of TGFB1. Interacts (via C-terminal domain) with FBN1 (via N-terminal domain). Interacts with FBN2. Interacts with ADAMTSL2. Interacts with EFEMP2. Post-translationally, contains hydroxylated asparagine residues. In terms of processing, two intrachain disulfide bonds from the TB3 domain are rearranged upon TGFB1 binding, and form interchain bonds with TGFB1 propeptide, anchoring it to the extracellular matrix. O-glycosylated on serine residues by POGLUT2 and POGLUT3.

Its subcellular location is the secreted. It is found in the extracellular space. It localises to the extracellular matrix. Its function is as follows. Key regulator of transforming growth factor beta (TGFB1, TGFB2 and TGFB3) that controls TGF-beta activation by maintaining it in a latent state during storage in extracellular space. Associates specifically via disulfide bonds with the Latency-associated peptide (LAP), which is the regulatory chain of TGF-beta, and regulates integrin-dependent activation of TGF-beta. Outcompeted by LRRC32/GARP for binding to LAP regulatory chain of TGF-beta. The sequence is that of Latent-transforming growth factor beta-binding protein 1 (Ltbp1) from Rattus norvegicus (Rat).